The chain runs to 128 residues: Lysozyme C-1 (128 aa).

Residues 1–128 (KVYDRCEFAR…VSQYIRGCKL (128 aa)) form the C-type lysozyme domain. 4 disulfide bridges follow: cysteine 6/cysteine 126, cysteine 30/cysteine 114, cysteine 63/cysteine 79, and cysteine 75/cysteine 93. Residues glutamate 35 and aspartate 51 contribute to the active site.

The protein belongs to the glycosyl hydrolase 22 family. Monomer.

It is found in the secreted. It carries out the reaction Hydrolysis of (1-&gt;4)-beta-linkages between N-acetylmuramic acid and N-acetyl-D-glucosamine residues in a peptidoglycan and between N-acetyl-D-glucosamine residues in chitodextrins.. Its function is as follows. Lysozymes have primarily a bacteriolytic function; those in tissues and body fluids are associated with the monocyte-macrophage system and enhance the activity of immunoagents. In Sus scrofa (Pig), this protein is Lysozyme C-1.